A 619-amino-acid polypeptide reads, in one-letter code: Chaperone protein HscA homolog (619 aa).

The protein belongs to the heat shock protein 70 family.

In terms of biological role, chaperone involved in the maturation of iron-sulfur cluster-containing proteins. Has a low intrinsic ATPase activity which is markedly stimulated by HscB. This is Chaperone protein HscA homolog from Pseudomonas aeruginosa (strain LESB58).